A 185-amino-acid chain; its full sequence is Peptidyl-tRNA hydrolase (185 aa).

Position 14 (Y14) interacts with tRNA. H19 acts as the Proton acceptor in catalysis. Residues Y65, N67, and N113 each contribute to the tRNA site.

The protein belongs to the PTH family. As to quaternary structure, monomer.

It is found in the cytoplasm. It carries out the reaction an N-acyl-L-alpha-aminoacyl-tRNA + H2O = an N-acyl-L-amino acid + a tRNA + H(+). Its function is as follows. Hydrolyzes ribosome-free peptidyl-tRNAs (with 1 or more amino acids incorporated), which drop off the ribosome during protein synthesis, or as a result of ribosome stalling. Functionally, catalyzes the release of premature peptidyl moieties from peptidyl-tRNA molecules trapped in stalled 50S ribosomal subunits, and thus maintains levels of free tRNAs and 50S ribosomes. This Rickettsia typhi (strain ATCC VR-144 / Wilmington) protein is Peptidyl-tRNA hydrolase.